The primary structure comprises 683 residues: Methionine--tRNA ligase (683 aa).

The 'HIGH' region signature appears at 15–25 (YYPSGKLHIGN). The short motif at 311-315 (KMSKS) is the 'KMSKS' region element. Lys-314 is an ATP binding site. In terms of domain architecture, tRNA-binding spans 581–683 (DFDKVELKVA…DNMVNGSLIS (103 aa)).

Belongs to the class-I aminoacyl-tRNA synthetase family. MetG type 2B subfamily. Homodimer.

It localises to the cytoplasm. The catalysed reaction is tRNA(Met) + L-methionine + ATP = L-methionyl-tRNA(Met) + AMP + diphosphate. Its function is as follows. Is required not only for elongation of protein synthesis but also for the initiation of all mRNA translation through initiator tRNA(fMet) aminoacylation. This chain is Methionine--tRNA ligase, found in Lactiplantibacillus plantarum (strain ATCC BAA-793 / NCIMB 8826 / WCFS1) (Lactobacillus plantarum).